A 395-amino-acid polypeptide reads, in one-letter code: Cuticlin-5 (395 aa).

The first 18 residues, 1–18 (MNFILAVFAIILLQAVRG), serve as a signal peptide directing secretion. Topologically, residues 19-358 (EIDNAIVGDP…ELCMTAIGTT (340 aa)) are extracellular. Positions 46-291 (SCVGNFIIKV…DYCDVPSCPD (246 aa)) constitute a ZP domain. 2 N-linked (GlcNAc...) asparagine glycosylation sites follow: Asn90 and Asn307. A helical membrane pass occupies residues 359 to 379 (LLVFLNAFLFIISLVSIVHVC). Topologically, residues 380 to 395 (CFRTSPKLEKTKSTML) are cytoplasmic.

Its subcellular location is the cell membrane. Functionally, plays a role in alae formation in L1 and dauer stage larvae. The chain is Cuticlin-5 from Caenorhabditis elegans.